The sequence spans 896 residues: Protein translocase subunit SecA (896 aa).

ATP is bound by residues glutamine 87, 105 to 109 (GEGKT), and aspartate 512. Residues 858–886 (RAGGEAEAAKPVVRDEKKVGRNDPCPCGS) form a disordered region. Residues 869–878 (VVRDEKKVGR) are compositionally biased toward basic and acidic residues. Residues cysteine 882, cysteine 884, cysteine 893, and cysteine 894 each contribute to the Zn(2+) site.

This sequence belongs to the SecA family. As to quaternary structure, monomer and homodimer. Part of the essential Sec protein translocation apparatus which comprises SecA, SecYEG and auxiliary proteins SecDF-YajC and YidC. The cofactor is Zn(2+).

The protein resides in the cell inner membrane. It localises to the cytoplasm. It catalyses the reaction ATP + H2O + cellular proteinSide 1 = ADP + phosphate + cellular proteinSide 2.. In terms of biological role, part of the Sec protein translocase complex. Interacts with the SecYEG preprotein conducting channel. Has a central role in coupling the hydrolysis of ATP to the transfer of proteins into and across the cell membrane, serving as an ATP-driven molecular motor driving the stepwise translocation of polypeptide chains across the membrane. This chain is Protein translocase subunit SecA, found in Syntrophotalea carbinolica (strain DSM 2380 / NBRC 103641 / GraBd1) (Pelobacter carbinolicus).